The chain runs to 61 residues: Progonadoliberin-1 (61 aa).

Gln1 is subject to Pyrrolidone carboxylic acid. Glycine amide is present on Gly10.

This sequence belongs to the GnRH family.

The protein localises to the secreted. In terms of biological role, stimulates the secretion of gonadotropins; it stimulates the secretion of both luteinizing and follicle-stimulating hormones. The chain is Progonadoliberin-1 (GNRH1) from Ovis aries (Sheep).